The chain runs to 255 residues: Small ribosomal subunit protein uS2 (255 aa).

A disordered region spans residues 232–255; it reads ASGRDIGASEEAPIEPALEDEAGA.

This sequence belongs to the universal ribosomal protein uS2 family.

The chain is Small ribosomal subunit protein uS2 from Agrobacterium fabrum (strain C58 / ATCC 33970) (Agrobacterium tumefaciens (strain C58)).